The primary structure comprises 196 residues: Adenylate kinase (196 aa).

Residue 9–17 coordinates ATP; sequence GIPGVGKST.

The protein belongs to the archaeal adenylate kinase family.

It localises to the cytoplasm. It catalyses the reaction AMP + ATP = 2 ADP. This is Adenylate kinase (adkA) from Pyrococcus horikoshii (strain ATCC 700860 / DSM 12428 / JCM 9974 / NBRC 100139 / OT-3).